Consider the following 405-residue polypeptide: Lipase lipl-1 (405 aa).

An N-terminal signal peptide occupies residues 1–20; that stretch reads MRSWSTVMLAVLATAATVFG. Asparagine 66 is a glycosylation site (N-linked (GlcNAc...) asparagine). The active-site Nucleophile is the serine 169. Asparagine 273 is a glycosylation site (N-linked (GlcNAc...) asparagine). Residues aspartate 344 and histidine 376 each act as charge relay system in the active site.

Belongs to the AB hydrolase superfamily. Lipase family.

It is found in the secreted. The protein resides in the lysosome lumen. Functionally, lipase that, together with lipl-3, plays a role in the response to nutrient deprivation by controlling lipid metabolism. Specifically, involved in the breakdown of lipids during lipophagy, a process during which lipids contained in lipid droplets that have been delivered to lysosomes by autophagy are degraded. The sequence is that of Lipase lipl-1 from Caenorhabditis elegans.